We begin with the raw amino-acid sequence, 30 residues long: Ribonuclease pancreatic (30 aa).

The span at 1-13 (KETAAAKFERQHM) shows a compositional bias: basic and acidic residues. The segment at 1–21 (KETAAAKFERQHMDPAPAAAX) is disordered. Lysine 7 and arginine 10 together coordinate substrate. Catalysis depends on histidine 12, which acts as the Proton acceptor.

This sequence belongs to the pancreatic ribonuclease family. Monomer. Interacts with and forms tight 1:1 complexes with RNH1. Dimerization of two such complexes may occur. Interaction with RNH1 inhibits this protein. In terms of tissue distribution, pancreas.

The protein localises to the secreted. It catalyses the reaction an [RNA] containing cytidine + H2O = an [RNA]-3'-cytidine-3'-phosphate + a 5'-hydroxy-ribonucleotide-3'-[RNA].. The enzyme catalyses an [RNA] containing uridine + H2O = an [RNA]-3'-uridine-3'-phosphate + a 5'-hydroxy-ribonucleotide-3'-[RNA].. Its function is as follows. Endonuclease that catalyzes the cleavage of RNA on the 3' side of pyrimidine nucleotides. Acts on single-stranded and double-stranded RNA. This is Ribonuclease pancreatic (RNASE1) from Odocoileus virginianus virginianus (Virginia white-tailed deer).